The primary structure comprises 59 residues: Large ribosomal subunit protein bL32 (59 aa).

The interval 1 to 20 is disordered; that stretch reads MAVQKNKPTRSKRGMRRSHD. A compositionally biased stretch (basic residues) spans 7-19; it reads KPTRSKRGMRRSH.

It belongs to the bacterial ribosomal protein bL32 family.

This Wigglesworthia glossinidia brevipalpis protein is Large ribosomal subunit protein bL32.